Consider the following 185-residue polypeptide: Ribosome maturation factor RimM (185 aa).

Residues 106–185 (TGDYYWKDLI…TIEVDWDPGF (80 aa)) form the PRC barrel domain.

This sequence belongs to the RimM family. Binds ribosomal protein uS19.

The protein resides in the cytoplasm. In terms of biological role, an accessory protein needed during the final step in the assembly of 30S ribosomal subunit, possibly for assembly of the head region. Essential for efficient processing of 16S rRNA. May be needed both before and after RbfA during the maturation of 16S rRNA. It has affinity for free ribosomal 30S subunits but not for 70S ribosomes. The polypeptide is Ribosome maturation factor RimM (Photorhabdus laumondii subsp. laumondii (strain DSM 15139 / CIP 105565 / TT01) (Photorhabdus luminescens subsp. laumondii)).